Here is a 122-residue protein sequence, read N- to C-terminus: Large ribosomal subunit protein uL14 (122 aa).

The protein belongs to the universal ribosomal protein uL14 family. In terms of assembly, part of the 50S ribosomal subunit. Forms a cluster with proteins L3 and L19. In the 70S ribosome, L14 and L19 interact and together make contacts with the 16S rRNA in bridges B5 and B8.

Functionally, binds to 23S rRNA. Forms part of two intersubunit bridges in the 70S ribosome. The sequence is that of Large ribosomal subunit protein uL14 from Elusimicrobium minutum (strain Pei191).